We begin with the raw amino-acid sequence, 276 residues long: Putative metal-binding protein TC_0696 (276 aa).

Positions 1-18 (MRLLILLLFSFGIIYSHG) are cleaved as a signal peptide. 4 residues coordinate a divalent metal cation: His-59, His-121, His-185, and Asp-256.

Belongs to the bacterial solute-binding protein 9 family.

The protein resides in the periplasm. In terms of biological role, part of an ATP-binding cassette (ABC) transport system involved in metal import. Binds a metal with high affinity and specificity and delivers it to the membrane permease for translocation into the cytoplasm. This chain is Putative metal-binding protein TC_0696, found in Chlamydia muridarum (strain MoPn / Nigg).